Reading from the N-terminus, the 190-residue chain is Bifunctional protein PyrR (190 aa).

Residues 107–119 (IILVDDVLYSGRT) carry the PRPP-binding motif.

It belongs to the purine/pyrimidine phosphoribosyltransferase family. PyrR subfamily.

The enzyme catalyses UMP + diphosphate = 5-phospho-alpha-D-ribose 1-diphosphate + uracil. Regulates the transcription of the pyrimidine nucleotide (pyr) operon in response to exogenous pyrimidines. In terms of biological role, also displays a weak uracil phosphoribosyltransferase activity which is not physiologically significant. The chain is Bifunctional protein PyrR from Corynebacterium diphtheriae (strain ATCC 700971 / NCTC 13129 / Biotype gravis).